A 165-amino-acid polypeptide reads, in one-letter code: Chorismate pyruvate-lyase (165 aa).

M35, R77, L115, and E156 together coordinate substrate.

The protein belongs to the UbiC family. As to quaternary structure, monomer.

Its subcellular location is the cytoplasm. It carries out the reaction chorismate = 4-hydroxybenzoate + pyruvate. Its pathway is cofactor biosynthesis; ubiquinone biosynthesis. In terms of biological role, removes the pyruvyl group from chorismate, with concomitant aromatization of the ring, to provide 4-hydroxybenzoate (4HB) for the ubiquinone pathway. The polypeptide is Chorismate pyruvate-lyase (Salmonella agona (strain SL483)).